The following is a 1449-amino-acid chain: VWFA and cache domain-containing protein CG16868 (1449 aa).

The N-terminal stretch at 1-23 (MWPNSNLNAVLLILAVLACPTSS) is a signal peptide. Topologically, residues 24-1220 (QHVPLAMANS…NPQREQHAYS (1197 aa)) are extracellular. 6 N-linked (GlcNAc...) asparagine glycosylation sites follow: Asn-32, Asn-112, Asn-153, Asn-407, Asn-447, and Asn-497. A VWFA domain is found at 320 to 541 (FVLFLIDVGS…TSLPQTSSRI (222 aa)). A Cache 1 domain is found at 557–639 (VHPPVVDADS…PRPLIQRETS (83 aa)). Residues Asn-649, Asn-668, and Asn-707 are each glycosylated (N-linked (GlcNAc...) asparagine). The 46-residue stretch at 889 to 934 (TAPYLDAGGAGYIITIAHTIFEGKAHALHSAQQDRPVAVVALDVPY) folds into the Cache 2 domain. N-linked (GlcNAc...) asparagine glycans are attached at residues Asn-1015, Asn-1025, Asn-1059, and Asn-1111. A helical membrane pass occupies residues 1221-1241 (AFGPLGGAIVVLVMVIGFAIY). At 1242-1449 (CYRHNLDAQT…VHRHMETAES (208 aa)) the chain is on the cytoplasmic side. Disordered regions lie at residues 1307 to 1339 (YHVS…SSDQ) and 1352 to 1416 (DKRH…GGSV). Low complexity predominate over residues 1359 to 1369 (DTMSISTSISS). Polar residues predominate over residues 1370 to 1392 (PTNRQQSSSQPNTHPYLSNQPTS).

This sequence belongs to the calcium channel subunit alpha-2/delta family.

It localises to the membrane. The sequence is that of VWFA and cache domain-containing protein CG16868 from Drosophila melanogaster (Fruit fly).